Here is a 261-residue protein sequence, read N- to C-terminus: Thiamine thiazole synthase (261 aa).

Residues A33, 52–53 (ER), G60, V124, and 152–154 (HVD) each bind NAD(+). Residues D154 and H169 each contribute to the Fe cation site. Residue I219 participates in NAD(+) binding. R229 provides a ligand contact to glycine.

This sequence belongs to the THI4 family. Homooctamer; tetramer of dimers. The cofactor is Fe(2+).

It catalyses the reaction hydrogen sulfide + glycine + NAD(+) = ADP-5-ethyl-4-methylthiazole-2-carboxylate + nicotinamide + 3 H2O + H(+). It participates in cofactor biosynthesis; thiamine diphosphate biosynthesis. In terms of biological role, involved in the biosynthesis of the thiazole moiety of thiamine. Catalyzes the conversion of NAD and glycine to adenosine diphosphate 5-(2-hydroxyethyl)-4-methylthiazole-2-carboxylate (ADT), an adenylated thiazole intermediate, using free sulfide as a source of sulfur. The protein is Thiamine thiazole synthase of Pyrobaculum calidifontis (strain DSM 21063 / JCM 11548 / VA1).